A 742-amino-acid chain; its full sequence is Two pore calcium channel protein 1 (742 aa).

The tract at residues Met1–Ala44 is disordered. The Cytoplasmic portion of the chain corresponds to Met1–Ser82. The chain crosses the membrane as a helical span at residues Phe83–Leu103. The Extracellular segment spans residues Leu104–Ser140. A helical transmembrane segment spans residues Leu141 to Tyr161. The Cytoplasmic segment spans residues Glu162–Lys176. Residues Ile177 to Phe197 traverse the membrane as a helical segment. At Arg198 to Arg204 the chain is on the extracellular side. A helical; Voltage-sensor membrane pass occupies residues Val205–Ile226. A helical membrane pass occupies residues Gly227–Ala247. Residues Tyr248–Lys258 lie on the Extracellular side of the membrane. The segment at residues Thr259–Val273 is an intramembrane region (pore-forming). Residues Leu274–Leu296 lie on the Extracellular side of the membrane. A helical membrane pass occupies residues Phe297–Ile317. Residues Tyr318 to Tyr446 lie on the Cytoplasmic side of the membrane. EF-hand domains follow at residues Ile335–Tyr370 and Thr376–Lys411. The helical transmembrane segment at Ile447–Ile467 threads the bilayer. At Glu468–Glu480 the chain is on the extracellular side. Asn469 is a glycosylation site (N-linked (GlcNAc...) asparagine). The helical transmembrane segment at Phe481–Gly501 threads the bilayer. Residues Ala502–Lys510 lie on the Cytoplasmic side of the membrane. Residues Phe511–Ser531 form a helical membrane-spanning segment. The Extracellular portion of the chain corresponds to Lys532–Glu540. Residues Trp541–Leu558 traverse the membrane as a helical; Voltage-sensor segment. At Gln559–Gly582 the chain is on the cytoplasmic side. Residues Ile583–Val603 form a helical membrane-spanning segment. Over Tyr604–Asp627 the chain is Extracellular. Residues Tyr628–Gly642 constitute an intramembrane region (pore-forming). Residues Asn643 to Tyr663 are Extracellular-facing. A helical membrane pass occupies residues Phe664–Leu684. Topologically, residues Glu685–Ser742 are cytoplasmic.

This sequence belongs to the calcium channel alpha-1 subunit (TC 1.A.1.11) family. Two pore calcium channel subfamily. Homodimer.

Its subcellular location is the membrane. Inhibited by Al(3+). Functions as a voltage-gated inward-rectifying Ca(2+) channel (VDCC) across the plasma membrane that mediates sucrose-induced Ca(2+) influx in autotrophically grown leaf cells. Acts as the major ROS-responsive Ca(2+) channel and is the possible target of Al-dependent inhibition. Plays a regulatory role in defense responses. In Hordeum vulgare (Barley), this protein is Two pore calcium channel protein 1 (TPC1).